The chain runs to 272 residues: D-aminoacyl-tRNA deacylase (272 aa).

This sequence belongs to the DtdA deacylase family. Monomer. The cofactor is Zn(2+).

The enzyme catalyses a D-aminoacyl-tRNA + H2O = a tRNA + a D-alpha-amino acid + H(+). It carries out the reaction glycyl-tRNA(Ala) + H2O = tRNA(Ala) + glycine + H(+). In terms of biological role, D-aminoacyl-tRNA deacylase with broad substrate specificity. By recycling D-aminoacyl-tRNA to D-amino acids and free tRNA molecules, this enzyme counteracts the toxicity associated with the formation of D-aminoacyl-tRNA entities in vivo. The chain is D-aminoacyl-tRNA deacylase from Thermococcus kodakarensis (strain ATCC BAA-918 / JCM 12380 / KOD1) (Pyrococcus kodakaraensis (strain KOD1)).